Reading from the N-terminus, the 1044-residue chain is Disease resistance protein PIK6-NP (1044 aa).

The structured coiled coil (CC) domain stretch occupies residues 3–184; sequence LAVGASEATM…PQIVSIKEPV (182 aa). One can recognise an NB-ARC domain in the interval 187 to 543; the sequence is KTVMENLEKW…IAEGFATEKQ (357 aa). The tract at residues 258–302 is disordered; that stretch reads QVSKQEEAGGSTESSSRDENTREPQGSSSTSSREENTAESGTKRM. 3 LRR repeats span residues 635–657, 682–705, and 706–728; these read LAQV…SFNY, MLVL…IEKL, and EYLE…VGQL. Residues 737 to 771 form a disordered region; it reads GNKNTRKGLRLPQEKRNKAMKNPSPQGKTKEPAEK. 6 LRR repeats span residues 808-834, 840-862, 866-888, 889-911, 935-958, and 980-1004; these read LTGL…LLSS, SCGL…LYNM, PRYL…ITSI, TTLN…ILRN, KGIL…EFKS, and MPAL…ILEN.

It belongs to the disease resistance NB-LRR family.

Probable disease resistance protein. Resistance proteins guard the plant against pathogens that contain an appropriate avirulence protein via an indirect interaction with this avirulence protein. That triggers a defense system including the hypersensitive response, which restricts the pathogen growth. At the opposite of cultivar Kusabue, the cultivar Nipponbare doesn't recognize the effector avirulence protein AVR-Pik from M.oryzae. This is Disease resistance protein PIK6-NP from Oryza sativa subsp. japonica (Rice).